The following is a 420-amino-acid chain: UDP-N-acetylglucosamine 1-carboxyvinyltransferase 2 (420 aa).

22 to 23 is a binding site for phosphoenolpyruvate; it reads KN. UDP-N-acetyl-alpha-D-glucosamine is bound at residue arginine 92. Cysteine 116 functions as the Proton donor in the catalytic mechanism. 2-(S-cysteinyl)pyruvic acid O-phosphothioketal is present on cysteine 116. UDP-N-acetyl-alpha-D-glucosamine contacts are provided by residues 121-125, aspartate 307, and isoleucine 329; that span reads RPIDL.

It belongs to the EPSP synthase family. MurA subfamily.

The protein localises to the cytoplasm. It carries out the reaction phosphoenolpyruvate + UDP-N-acetyl-alpha-D-glucosamine = UDP-N-acetyl-3-O-(1-carboxyvinyl)-alpha-D-glucosamine + phosphate. Its pathway is cell wall biogenesis; peptidoglycan biosynthesis. Its function is as follows. Cell wall formation. Adds enolpyruvyl to UDP-N-acetylglucosamine. The sequence is that of UDP-N-acetylglucosamine 1-carboxyvinyltransferase 2 from Streptococcus thermophilus (strain CNRZ 1066).